Here is a 121-residue protein sequence, read N- to C-terminus: Ribosome-binding factor A (121 aa).

It belongs to the RbfA family. In terms of assembly, monomer. Binds 30S ribosomal subunits, but not 50S ribosomal subunits or 70S ribosomes.

It localises to the cytoplasm. Its function is as follows. One of several proteins that assist in the late maturation steps of the functional core of the 30S ribosomal subunit. Associates with free 30S ribosomal subunits (but not with 30S subunits that are part of 70S ribosomes or polysomes). Required for efficient processing of 16S rRNA. May interact with the 5'-terminal helix region of 16S rRNA. The polypeptide is Ribosome-binding factor A (Lactobacillus helveticus (strain DPC 4571)).